Here is a 954-residue protein sequence, read N- to C-terminus: Bifunctional glutamine synthetase adenylyltransferase/adenylyl-removing enzyme (954 aa).

Residues Met-1–Thr-450 form an adenylyl removase region. An adenylyl transferase region spans residues Gly-454–Asp-954.

The protein belongs to the GlnE family. Requires Mg(2+) as cofactor.

It carries out the reaction [glutamine synthetase]-O(4)-(5'-adenylyl)-L-tyrosine + phosphate = [glutamine synthetase]-L-tyrosine + ADP. The catalysed reaction is [glutamine synthetase]-L-tyrosine + ATP = [glutamine synthetase]-O(4)-(5'-adenylyl)-L-tyrosine + diphosphate. Functionally, involved in the regulation of glutamine synthetase GlnA, a key enzyme in the process to assimilate ammonia. When cellular nitrogen levels are high, the C-terminal adenylyl transferase (AT) inactivates GlnA by covalent transfer of an adenylyl group from ATP to specific tyrosine residue of GlnA, thus reducing its activity. Conversely, when nitrogen levels are low, the N-terminal adenylyl removase (AR) activates GlnA by removing the adenylyl group by phosphorolysis, increasing its activity. The regulatory region of GlnE binds the signal transduction protein PII (GlnB) which indicates the nitrogen status of the cell. The chain is Bifunctional glutamine synthetase adenylyltransferase/adenylyl-removing enzyme from Shewanella woodyi (strain ATCC 51908 / MS32).